The chain runs to 681 residues: GAS2-like protein 1 (681 aa).

Ala2 is subject to N-acetylalanine. Residues 27–148 (EAMKEDLAEW…CLLEVARRGA (122 aa)) enclose the Calponin-homology (CH) domain. 3 disordered regions span residues 168–204 (LRAAPPAPNAPAAGEDTTETAPAPGTPARGPRMTPSD), 278–509 (STAH…PLQL), and 536–681 (ASVT…DSWM). Over residues 186–199 (ETAPAPGTPARGPR) the composition is skewed to low complexity. Position 193 is a phosphothreonine (Thr193). Residues 203-275 (SDLRNLDELV…HYLDKHDPCR (73 aa)) form the GAR domain. The span at 291–303 (FSPQRVSPTTSPR) shows a compositional bias: polar residues. Phosphoserine is present on residues Ser306 and Ser316. Positions 327 to 342 (STKEGPETPPRPRDQL) are enriched in basic and acidic residues. Thr334 is subject to Phosphothreonine. 2 positions are modified to phosphoserine: Ser352 and Ser355. Low complexity predominate over residues 354-365 (DSDSSASSAQSG). Residues 370–381 (RSDDTGTGPRRE) show a composition bias toward basic and acidic residues. Thr391 bears the Phosphothreonine mark. A Phosphoserine modification is found at Ser394. Residues 404–413 (QSRDRLDRGR) show a composition bias toward basic and acidic residues. Phosphoserine is present on residues Ser436, Ser438, Ser479, and Ser486. A compositionally biased stretch (basic and acidic residues) spans 437-454 (QSREEQAVLLVRRDRDGQ). Low complexity predominate over residues 475 to 493 (PRARSPAAPRLSRVSSPSP). Position 487 is an omega-N-methylarginine (Arg487). Phosphoserine occurs at positions 490 and 492. A Phosphothreonine modification is found at Thr498. Arg504 bears the Omega-N-methylarginine mark. Positions 542-556 (GPVPDPARAPDPPAP) are enriched in pro residues. The segment covering 557–571 (DSAYCSSSSSSSSLS) has biased composition (low complexity). Position 633 is an omega-N-methylarginine (Arg633). Over residues 634-644 (GRMDTQPDRKP) the composition is skewed to basic and acidic residues. Ser657 is modified (phosphoserine).

This sequence belongs to the GAS2 family. As to quaternary structure, interacts with MAPRE1.

The protein resides in the cytoplasm. Its subcellular location is the cytoskeleton. It localises to the stress fiber. Functionally, involved in the cross-linking of microtubules and microfilaments. Regulates microtubule dynamics and stability by interacting with microtubule plus-end tracking proteins, such as MAPRE1, to regulate microtubule growth along actin stress fibers. The protein is GAS2-like protein 1 (GAS2L1) of Homo sapiens (Human).